The primary structure comprises 1025 residues: Leucyl-cystinyl aminopeptidase (1025 aa).

M1 is modified (N-acetylmethionine). At 1 to 110 (MEPFTNDRLQ…GACSVPSART (110 aa)) the chain is on the cytoplasmic side. A Dileucine internalization motif motif is present at residues 53–54 (LL). A Phosphotyrosine modification is found at Y70. Residues 76–77 (LL) carry the Dileucine internalization motif motif. Residues S80 and S91 each carry the phosphoserine modification. Residues 96-101 (RQSPDG) are tankyrase binding. The chain crosses the membrane as a helical; Signal-anchor for type II membrane protein span at residues 111-131 (MVVCAFVIVVAVSVIMVIYLL). At 132–1025 (PRCTFTKEGC…KNLKSLTWWL (894 aa)) the chain is on the extracellular side. 5 N-linked (GlcNAc...) asparagine glycosylation sites follow: N145, N184, N215, N256, and N266. Residue E295 participates in substrate binding. N-linked (GlcNAc...) asparagine glycosylation is found at N368 and N374. 428-432 (GAMEN) is a substrate binding site. The N-linked (GlcNAc...) asparagine glycan is linked to N448. H464 contributes to the Zn(2+) binding site. The active-site Proton acceptor is E465. Zn(2+) contacts are provided by H468 and E487. Residues N525, N578, N598, N664, N682, N760, N834, N850, and N989 are each glycosylated (N-linked (GlcNAc...) asparagine).

It belongs to the peptidase M1 family. Homodimer. Binds tankyrases 1 and 2. It depends on Zn(2+) as a cofactor. Post-translationally, the pregnancy serum form is derived from the membrane-bound form by proteolytic processing. In terms of processing, N-glycosylated. In terms of tissue distribution, highly expressed in placenta, heart, kidney and small intestine. Detected at lower levels in neuronal cells in the brain, in skeletal muscle, spleen, liver, testes and colon.

The protein resides in the cell membrane. It localises to the secreted. The catalysed reaction is Release of an N-terminal amino acid, Cys-|-Xaa-, in which the half-cystine residue is involved in a disulfide loop, notably in oxytocin or vasopressin. Hydrolysis rates on a range of aminoacyl arylamides exceed that for the cystinyl derivative, however.. Release of an N-terminal amino acid, cleaves before cysteine, leucine as well as other amino acids. Degrades peptide hormones such as oxytocin, vasopressin and angiotensin III, and plays a role in maintaining homeostasis during pregnancy. May be involved in the inactivation of neuronal peptides in the brain. Cleaves Met-enkephalin and dynorphin. Binds angiotensin IV and may be the angiotensin IV receptor in the brain. The chain is Leucyl-cystinyl aminopeptidase (LNPEP) from Homo sapiens (Human).